A 201-amino-acid polypeptide reads, in one-letter code: Ras-related protein Rab-9B (201 aa).

Residues V18, G19, K20, S21, S22, D33, S34, A36, H38, and T39 each coordinate GTP. S21 provides a ligand contact to Mg(2+). A Switch 1 motif is present at residues 31–42; the sequence is KFDSQAFHTIGV. Position 34 is a phosphoserine (S34). The Mg(2+) site is built by T39 and D62. The Switch 2 motif lies at 64–78; it reads AGQERFKSLRTPFYR. 5 residues coordinate GTP: G65, N124, K125, A155, and K156. 2 S-geranylgeranyl cysteine lipidation sites follow: C200 and C201.

It belongs to the small GTPase superfamily. Rab family. As to quaternary structure, interacts (GTP-bound form) with SGSM1; the GDP-bound form has much lower affinity for SGSM1. The GTP-bound form but not the GDP-bound form interacts with HPS4 and the BLOC-3 complex (heterodimer of HPS1 and HPS4) but does not interact with HPS1 alone. Interacts (GTP-bound form) with NDE1. Mg(2+) serves as cofactor. In terms of tissue distribution, ubiquitous.

The protein localises to the cell membrane. The protein resides in the cytoplasmic vesicle. Its subcellular location is the phagosome. It is found in the phagosome membrane. It carries out the reaction GTP + H2O = GDP + phosphate + H(+). With respect to regulation, regulated by guanine nucleotide exchange factors (GEFs) which promote the exchange of bound GDP for free GTP. Regulated by GTPase activating proteins (GAPs) which increase the GTP hydrolysis activity. Inhibited by GDP dissociation inhibitors (GDIs). Functionally, the small GTPases Rab are key regulators of intracellular membrane trafficking, from the formation of transport vesicles to their fusion with membranes. Rabs cycle between an inactive GDP-bound form and an active GTP-bound form that is able to recruit to membranes different sets of downstream effectors directly responsible for vesicle formation, movement, tethering and fusion. RAB9B is involved in the transport of proteins between the endosomes and the trans Golgi network. May use NDE1/NDEL1 as an effector to interact with the dynein motor complex in order to control retrograde trafficking of RAB9-associated late endosomes to the TGN. The sequence is that of Ras-related protein Rab-9B from Homo sapiens (Human).